The following is a 168-amino-acid chain: Ubiquitin-conjugating enzyme E2 2 (168 aa).

Residues 4 to 150 (PAKRRLMRDF…VRETVENSWN (147 aa)) enclose the UBC core domain. The active-site Glycyl thioester intermediate is the cysteine 88. The tract at residues 143-168 (ETVENSWNEDDEDEDEDEDEDIDDAE) is disordered. The span at 149–168 (WNEDDEDEDEDEDEDIDDAE) shows a compositional bias: acidic residues.

The protein belongs to the ubiquitin-conjugating enzyme family.

Its subcellular location is the cytoplasm. The protein localises to the nucleus. The catalysed reaction is S-ubiquitinyl-[E1 ubiquitin-activating enzyme]-L-cysteine + [E2 ubiquitin-conjugating enzyme]-L-cysteine = [E1 ubiquitin-activating enzyme]-L-cysteine + S-ubiquitinyl-[E2 ubiquitin-conjugating enzyme]-L-cysteine.. Its pathway is protein modification; protein ubiquitination. Functionally, catalyzes the covalent attachment of ubiquitin to other proteins. Plays a role in transcription regulation by catalyzing the monoubiquitination of histone H2B to form H2BK123ub1. H2BK123ub1 gives a specific tag for epigenetic transcriptional activation and is also a prerequisite for H3K4me and H3K79me formation. Also involved in postreplication repair of UV-damaged DNA, in N-end rule-dependent protein degradation and in sporulation. This chain is Ubiquitin-conjugating enzyme E2 2 (UBC2), found in Debaryomyces hansenii (strain ATCC 36239 / CBS 767 / BCRC 21394 / JCM 1990 / NBRC 0083 / IGC 2968) (Yeast).